The following is a 161-amino-acid chain: Phosphotransferase enzyme IIB component GlvB (161 aa).

A helical transmembrane segment spans residues 10 to 32; the sequence is LTQIAIGLCFTLLYFVVFRTLIL. The PTS EIIB type-1 domain occupies 70-152; sequence LDQAAGILQA…DSLINSHQSA (83 aa). The active-site Phosphocysteine intermediate is the Cys-92.

The protein localises to the cell inner membrane. The phosphoenolpyruvate-dependent sugar phosphotransferase system (sugar PTS), a major carbohydrate active -transport system, catalyzes the phosphorylation of incoming sugar substrates concomitantly with their translocation across the cell membrane. This operon may be cryptic in wild-type K12 strains. The protein is Phosphotransferase enzyme IIB component GlvB of Escherichia coli (strain K12).